A 158-amino-acid chain; its full sequence is Transcription elongation factor GreA (158 aa).

It belongs to the GreA/GreB family.

Its function is as follows. Necessary for efficient RNA polymerase transcription elongation past template-encoded arresting sites. The arresting sites in DNA have the property of trapping a certain fraction of elongating RNA polymerases that pass through, resulting in locked ternary complexes. Cleavage of the nascent transcript by cleavage factors such as GreA or GreB allows the resumption of elongation from the new 3'terminus. GreA releases sequences of 2 to 3 nucleotides. This is Transcription elongation factor GreA from Macrococcus caseolyticus (strain JCSC5402) (Macrococcoides caseolyticum).